A 202-amino-acid polypeptide reads, in one-letter code: MPGSALLSLQQELRRGFEALKAAKDTFDGGHAECQELVSSLGNLAPQLKALKQVQISETPLSGFPCLQQRLHYKLSLAVDALLAKLAEKMAALQKVWDAFAQQVFTVVQLYEKNTDALDISVCVSRSAVCPSVSDMLEWLQDADRYYRLQLMQSRLLLQTLTPTDLTSMETAPNRWRSVRSARQEERIADALCQVSIFLETE.

Part of the 55LCC heterohexameric ATPase complex. Does not associate with pre-60S ribosomal particles.

Its subcellular location is the nucleus. It localises to the cytoplasm. Part of the 55LCC heterohexameric ATPase complex which is chromatin-associated and promotes replisome proteostasis to maintain replication fork progression and genome stability. Required for replication fork progression, sister chromatid cohesion, and chromosome stability. The ATPase activity is specifically enhanced by replication fork DNA and is coupled to cysteine protease-dependent cleavage of replisome substrates in response to replication fork damage. Uses ATPase activity to process replisome substrates in S-phase, facilitating their proteolytic turnover from chromatin to ensure DNA replication and mitotic fidelity. Involved in the cytoplasmic maturation steps of pre-60S ribosomal particles by promoting the release of shuttling protein RSL24D1/RLP24 from the pre-ribosomal particles. Plays an essential role in early embryonic development. The protein is AFG2-interacting ribosome maturation factor (airim) of Danio rerio (Zebrafish).